We begin with the raw amino-acid sequence, 84 residues long: NADH dehydrogenase [ubiquinone] 1 alpha subcomplex subunit 3 (84 aa).

Alanine 2 is modified (N-acetylalanine). A helical membrane pass occupies residues 19 to 39 (LVVSFVVGGLAVILPPLSPYF). Residues 56–84 (PVRDDGNMPDVPSHPQDPQGPSLEWLKKL) form a disordered region.

The protein belongs to the complex I NDUFA3 subunit family. Complex I is composed of 45 different subunits.

It is found in the mitochondrion inner membrane. In terms of biological role, accessory subunit of the mitochondrial membrane respiratory chain NADH dehydrogenase (Complex I), that is believed not to be involved in catalysis. Complex I functions in the transfer of electrons from NADH to the respiratory chain. The immediate electron acceptor for the enzyme is believed to be ubiquinone. The polypeptide is NADH dehydrogenase [ubiquinone] 1 alpha subcomplex subunit 3 (NDUFA3) (Homo sapiens (Human)).